The primary structure comprises 310 residues: Putative sugar kinase PH1459 (310 aa).

The ATP site is built by K194, T219, and G224.

This sequence belongs to the carbohydrate kinase PfkB family.

This chain is Putative sugar kinase PH1459, found in Pyrococcus horikoshii (strain ATCC 700860 / DSM 12428 / JCM 9974 / NBRC 100139 / OT-3).